Reading from the N-terminus, the 553-residue chain is Putative transport protein YidE (553 aa).

5 helical membrane-spanning segments follow: residues 4–24 (IALT…IGNI), 28–48 (GVGF…HFVD), 65–85 (FGLI…FFAS), 95–115 (LFAV…HKIF), and 158–178 (MSYA…MWLM). RCK C-terminal domains follow at residues 192–276 (KHES…VIGK) and 279–361 (DTSL…VVGN). Transmembrane regions (helical) follow at residues 371–391 (MLPV…PLFV), 393–413 (GFPV…ALIL), 437–457 (LGIV…FVDT), 464–484 (LSWI…IGLL), 493–513 (YLTL…LAFA), and 533–553 (LVMF…WGMG).

The protein belongs to the AAE transporter (TC 2.A.81) family. YidE subfamily.

The protein localises to the cell membrane. This Salmonella paratyphi C (strain RKS4594) protein is Putative transport protein YidE.